The sequence spans 230 residues: Cytidylate kinase (230 aa).

16–24 (GPASAGKST) contacts ATP.

This sequence belongs to the cytidylate kinase family. Type 1 subfamily.

It is found in the cytoplasm. The enzyme catalyses CMP + ATP = CDP + ADP. The catalysed reaction is dCMP + ATP = dCDP + ADP. The polypeptide is Cytidylate kinase (Lactobacillus gasseri (strain ATCC 33323 / DSM 20243 / BCRC 14619 / CIP 102991 / JCM 1131 / KCTC 3163 / NCIMB 11718 / NCTC 13722 / AM63)).